A 298-amino-acid chain; its full sequence is Acetylglutamate kinase (298 aa).

Substrate-binding positions include 69 to 70 (GG), Arg91, and Asn191.

Belongs to the acetylglutamate kinase family. ArgB subfamily.

The protein resides in the cytoplasm. It catalyses the reaction N-acetyl-L-glutamate + ATP = N-acetyl-L-glutamyl 5-phosphate + ADP. It functions in the pathway amino-acid biosynthesis; L-arginine biosynthesis; N(2)-acetyl-L-ornithine from L-glutamate: step 2/4. Catalyzes the ATP-dependent phosphorylation of N-acetyl-L-glutamate. The sequence is that of Acetylglutamate kinase from Neisseria meningitidis serogroup C (strain 053442).